The following is a 113-amino-acid chain: Large ribosomal subunit protein bL19m (113 aa).

It belongs to the bacterial ribosomal protein bL19 family.

The protein localises to the mitochondrion. The polypeptide is Large ribosomal subunit protein bL19m (RPL19) (Reclinomonas americana).